A 495-amino-acid polypeptide reads, in one-letter code: UDP-N-acetylmuramoyl-L-alanyl-D-glutamate--2,6-diaminopimelate ligase (495 aa).

Residues L28, S30, and 45-47 (HRV) contribute to the UDP-N-acetyl-alpha-D-muramoyl-L-alanyl-D-glutamate site. 117–123 (GTNGKTT) is an ATP binding site. UDP-N-acetyl-alpha-D-muramoyl-L-alanyl-D-glutamate-binding positions include N158, 159-160 (TT), S186, Q192, and R194. The residue at position 226 (K226) is an N6-carboxylysine. Residues R394, 418–421 (DNPR), G469, and E473 each bind meso-2,6-diaminopimelate. A Meso-diaminopimelate recognition motif motif is present at residues 418-421 (DNPR).

It belongs to the MurCDEF family. MurE subfamily. Mg(2+) serves as cofactor. In terms of processing, carboxylation is probably crucial for Mg(2+) binding and, consequently, for the gamma-phosphate positioning of ATP.

It is found in the cytoplasm. It carries out the reaction UDP-N-acetyl-alpha-D-muramoyl-L-alanyl-D-glutamate + meso-2,6-diaminopimelate + ATP = UDP-N-acetyl-alpha-D-muramoyl-L-alanyl-gamma-D-glutamyl-meso-2,6-diaminopimelate + ADP + phosphate + H(+). It participates in cell wall biogenesis; peptidoglycan biosynthesis. In terms of biological role, catalyzes the addition of meso-diaminopimelic acid to the nucleotide precursor UDP-N-acetylmuramoyl-L-alanyl-D-glutamate (UMAG) in the biosynthesis of bacterial cell-wall peptidoglycan. The chain is UDP-N-acetylmuramoyl-L-alanyl-D-glutamate--2,6-diaminopimelate ligase from Histophilus somni (strain 129Pt) (Haemophilus somnus).